The chain runs to 397 residues: MPRPGQPRPSSGPPRLGPWERPSELCLETNDERSQPPPGRRTRRPDPKDPGHHGPESITFISGSAEPANEPPTCCLLWRPWGWDWCRAAFCFRRCRDCLQRCGACVRGCSPCLSAGDPIEGSAEAAWAKEHNGVPPSPDRAPPSRRDGQRLKTSMGSSFSYPDVKLKGIPVYPYRHATSPVPDVDSCCKEPLAEPPPTRHSLPSTFTNSPRGSEEYYSFHESDLDLPEMGSGSMSSREIDVLIFKKLTELFSVHQIDELAKCTSDTVFLEKTSKISDLISSITQDYHLDEQDAEGRLVRGIIRISTRKSRSRPQTSEGRSARSTAPAAAPDSGHETMLGSGLSQDELTVQISQETTADAIARKLRPYGAPGYPASQDSSFQGTDTDSSGAPLLQVYC.

The span at 1 to 16 (MPRPGQPRPSSGPPRL) shows a compositional bias: pro residues. Disordered stretches follow at residues 1–67 (MPRP…SAEP), 130–158 (EHNG…MGSS), and 192–214 (LAEP…RGSE). Positions 44 to 55 (RPDPKDPGHHGP) are enriched in basic and acidic residues. A compositionally biased stretch (polar residues) spans 201–211 (SLPSTFTNSPR). The residue at position 218 (Ser-218) is a Phosphoserine. 2 disordered regions span residues 304–339 (ISTR…TMLG) and 361–392 (ARKL…GAPL). The span at 321-330 (ARSTAPAAAP) shows a compositional bias: low complexity. Positions 375–388 (SQDSSFQGTDTDSS) are enriched in polar residues.

Its subcellular location is the cytoplasm. The protein localises to the cell junction. Its function is as follows. Plays a role in the regulation of the epidermis formation during early development. Required both as an inhibitor of basal cell proliferation and a promoter of differentiation of basal progenitor cell progeny. The polypeptide is Keratinocyte differentiation factor 1 (Kdf1) (Mus musculus (Mouse)).